The chain runs to 345 residues: S-adenosylmethionine:tRNA ribosyltransferase-isomerase (345 aa).

Belongs to the QueA family. In terms of assembly, monomer.

The protein localises to the cytoplasm. The enzyme catalyses 7-aminomethyl-7-carbaguanosine(34) in tRNA + S-adenosyl-L-methionine = epoxyqueuosine(34) in tRNA + adenine + L-methionine + 2 H(+). Its pathway is tRNA modification; tRNA-queuosine biosynthesis. Its function is as follows. Transfers and isomerizes the ribose moiety from AdoMet to the 7-aminomethyl group of 7-deazaguanine (preQ1-tRNA) to give epoxyqueuosine (oQ-tRNA). This chain is S-adenosylmethionine:tRNA ribosyltransferase-isomerase, found in Acidiphilium cryptum (strain JF-5).